The following is a 678-amino-acid chain: Catalase (678 aa).

Basic and acidic residues predominate over residues 1-26 (MSNEREMQNKKDQQLESFRVEDEGKK). The disordered stretch occupies residues 1–32 (MSNEREMQNKKDQQLESFRVEDEGKKLTTNQG). Catalysis depends on residues His75 and Asn148. Position 362 (Tyr362) interacts with heme.

This sequence belongs to the catalase family. HPII subfamily. Heme is required as a cofactor.

It is found in the cytoplasm. The enzyme catalyses 2 H2O2 = O2 + 2 H2O. In terms of biological role, decomposes hydrogen peroxide into water and oxygen; serves to protect cells from the toxic effects of hydrogen peroxide. This Alkalihalophilus pseudofirmus (strain ATCC BAA-2126 / JCM 17055 / OF4) (Bacillus pseudofirmus) protein is Catalase (katE).